The sequence spans 506 residues: Tabersonine 3-oxygenase (506 aa).

At 1–5 the chain is on the lumenal side; sequence MEFHE. A helical membrane pass occupies residues 6-26; it reads SSPFVFITRGFIFIAISIAVL. At 27 to 506 the chain is on the cytoplasmic side; that stretch reads RRIISKKTKT…DLQLIATSYA (480 aa). Position 450 (Cys450) interacts with heme.

This sequence belongs to the cytochrome P450 family. It depends on heme as a cofactor. As to expression, expressed in leaf epidermis.

It is found in the endoplasmic reticulum membrane. The enzyme catalyses 16-methoxytabersonine + reduced [NADPH--hemoprotein reductase] + O2 = (3R)-1,2-didehydro-3-hydroxy-16-methoxy-2,3-dihydrotabersonine + oxidized [NADPH--hemoprotein reductase] + H2O + H(+). It catalyses the reaction (-)-tabersonine + reduced [NADPH--hemoprotein reductase] + O2 = (3R)-1,2-didehydro-3-hydroxy-2,3-dihydrotabersonine + oxidized [NADPH--hemoprotein reductase] + H2O + H(+). It participates in alkaloid biosynthesis; vindoline biosynthesis. Functionally, cytochrome P450 catalyzing the monooxygenation of 16-methoxytabersonine, 16-hydroxytabersonine and tabersonine, but not of 2,3-dihydrotabersonine. Converts the C2,C3 alkene of tabersonine and 16-methoxytabersonine to the epoxides, which then spontaneously open to form the corresponding imine alcohols. Inactive in converting amyrin to ursolic acid. The polypeptide is Tabersonine 3-oxygenase (Catharanthus roseus (Madagascar periwinkle)).